We begin with the raw amino-acid sequence, 351 residues long: Prostaglandin reductase 2 (351 aa).

99–100 (FY) contacts substrate. Residues 165–168 (GACG), K192, Y208, N231, 253–259 (CGQISQY), 287–289 (FMV), and N337 contribute to the NADP(+) site. A substrate-binding site is contributed by 288–290 (MVL).

The protein belongs to the NADP-dependent oxidoreductase L4BD family. As to quaternary structure, monomer.

The protein resides in the cytoplasm. It catalyses the reaction 13,14-dihydro-15-oxo-prostaglandin E2 + NAD(+) = 15-oxoprostaglandin E2 + NADH + H(+). The catalysed reaction is 13,14-dihydro-15-oxo-prostaglandin E2 + NADP(+) = 15-oxoprostaglandin E2 + NADPH + H(+). The enzyme catalyses 13,14-dihydro-15-oxo-PGF2alpha + NADP(+) = 15-oxoprostaglandin F2alpha + NADPH + H(+). It carries out the reaction 13,14-dihydro-15-oxo-prostaglandin E1 + NADP(+) = 15-oxoprostaglandin E1 + NADPH + H(+). It catalyses the reaction 13,14-dihydro-15-oxo-prostaglandin F1alpha + NADP(+) = 15-oxoprostaglandin F1alpha + NADPH + H(+). Functions as 15-oxo-prostaglandin 13-reductase and acts on 15-keto-PGE1, 15-keto-PGE2, 15-keto-PGE1-alpha and 15-keto-PGE2-alpha with highest activity towards 15-keto-PGE2. Overexpression represses transcriptional activity of PPARG and inhibits adipocyte differentiation. The polypeptide is Prostaglandin reductase 2 (Rattus norvegicus (Rat)).